The sequence spans 317 residues: Acetyl-coenzyme A carboxylase carboxyl transferase subunit alpha (317 aa).

One can recognise a CoA carboxyltransferase C-terminal domain in the interval 39 to 293 (RLETKAREAL…GDAIADALSQ (255 aa)).

The protein belongs to the AccA family. As to quaternary structure, acetyl-CoA carboxylase is a heterohexamer composed of biotin carboxyl carrier protein (AccB), biotin carboxylase (AccC) and two subunits each of ACCase subunit alpha (AccA) and ACCase subunit beta (AccD).

It localises to the cytoplasm. It catalyses the reaction N(6)-carboxybiotinyl-L-lysyl-[protein] + acetyl-CoA = N(6)-biotinyl-L-lysyl-[protein] + malonyl-CoA. It functions in the pathway lipid metabolism; malonyl-CoA biosynthesis; malonyl-CoA from acetyl-CoA: step 1/1. Component of the acetyl coenzyme A carboxylase (ACC) complex. First, biotin carboxylase catalyzes the carboxylation of biotin on its carrier protein (BCCP) and then the CO(2) group is transferred by the carboxyltransferase to acetyl-CoA to form malonyl-CoA. In Xanthobacter autotrophicus (strain ATCC BAA-1158 / Py2), this protein is Acetyl-coenzyme A carboxylase carboxyl transferase subunit alpha.